We begin with the raw amino-acid sequence, 598 residues long: Peroxisomal targeting signal receptor (598 aa).

Disordered regions lie at residues methionine 1–serine 54, arginine 135–glycine 154, and alanine 208–glutamate 237. Over residues glutamate 9–lysine 22 the composition is skewed to polar residues. A Glycyl cysteine thioester (Cys-Gly) (interchain with G-Cter in ubiquitin) cross-link involves residue cysteine 10. Residue lysine 22 forms a Glycyl lysine isopeptide (Lys-Gly) (interchain with G-Cter in ubiquitin) linkage. The segment covering histidine 23–valine 35 has biased composition (basic and acidic residues). Positions alanine 220–glutamate 233 are enriched in low complexity. 7 TPR repeats span residues proline 304–histidine 337, alanine 338–asparagine 371, leucine 372–glutamine 409, alanine 410–aspartate 447, alanine 448–aspartate 481, alanine 482–phenylalanine 515, and valine 516–glutamate 549.

It belongs to the peroxisomal targeting signal receptor family. Post-translationally, ubiquitination at Cys-10 is UBC4-independent but requires the presence of PEX4. Ubiquitination at Lys-22 is UBC4-dependent.

The protein resides in the cytoplasm. It is found in the peroxisome membrane. Functionally, binds to the C-terminal PTS1-type tripeptide peroxisomal targeting signal (SKL-type) and plays an essential role in peroxisomal protein import. The polypeptide is Peroxisomal targeting signal receptor (PAY32) (Yarrowia lipolytica (strain CLIB 122 / E 150) (Yeast)).